A 258-amino-acid chain; its full sequence is Trypsin (258 aa).

An N-terminal signal peptide occupies residues 1–16; the sequence is MIRFTLALAVIGVTFA. Residues 17–29 constitute a propeptide, activation peptide; the sequence is ASTPQIETNPNLE. One can recognise a Peptidase S1 domain in the interval 30-257; sequence IIGGHDANII…FRDWINEETE (228 aa). C55 and C71 are oxidised to a cystine. H70 serves as the catalytic Charge relay system. N110 carries N-linked (GlcNAc...) asparagine glycosylation. The active-site Charge relay system is D117. N-linked (GlcNAc...) asparagine glycosylation is found at N130 and N188. 2 disulfide bridges follow: C182–C197 and C209–C233. S213 (charge relay system) is an active-site residue.

Belongs to the peptidase S1 family. In terms of tissue distribution, expressed in larval carcasses and gut, and adult gut.

The protein resides in the secreted. The catalysed reaction is Preferential cleavage: Arg-|-Xaa, Lys-|-Xaa.. The sequence is that of Trypsin from Phaedon cochleariae (Mustard beetle).